Consider the following 268-residue polypeptide: Bis(5'-nucleosyl)-tetraphosphatase, symmetrical (268 aa).

It belongs to the Ap4A hydrolase family.

It carries out the reaction P(1),P(4)-bis(5'-adenosyl) tetraphosphate + H2O = 2 ADP + 2 H(+). Hydrolyzes diadenosine 5',5'''-P1,P4-tetraphosphate to yield ADP. This chain is Bis(5'-nucleosyl)-tetraphosphatase, symmetrical, found in Nitrosomonas europaea (strain ATCC 19718 / CIP 103999 / KCTC 2705 / NBRC 14298).